Reading from the N-terminus, the 255-residue chain is Taurine import ATP-binding protein TauB (255 aa).

An ABC transporter domain is found at 2 to 229 (LQISHLYADY…RFVAGESSRS (228 aa)). 34–41 (GPSGCGKT) contacts ATP.

It belongs to the ABC transporter superfamily. Taurine importer (TC 3.A.1.17.1) family. The complex is composed of two ATP-binding proteins (TauB), two transmembrane proteins (TauC) and a solute-binding protein (TauA).

The protein localises to the cell inner membrane. It carries out the reaction taurine(out) + ATP + H2O = taurine(in) + ADP + phosphate + H(+). Functionally, part of the ABC transporter complex TauABC involved in taurine import. Responsible for energy coupling to the transport system. In Shigella boydii serotype 4 (strain Sb227), this protein is Taurine import ATP-binding protein TauB.